The following is a 578-amino-acid chain: Arginine--tRNA ligase (578 aa).

Positions 123-133 (PNLAKEMHVGH) match the 'HIGH' region motif.

It belongs to the class-I aminoacyl-tRNA synthetase family. In terms of assembly, monomer.

It localises to the cytoplasm. It carries out the reaction tRNA(Arg) + L-arginine + ATP = L-arginyl-tRNA(Arg) + AMP + diphosphate. This Hahella chejuensis (strain KCTC 2396) protein is Arginine--tRNA ligase.